The sequence spans 266 residues: Phosphate import ATP-binding protein PstB 2 (266 aa).

The ABC transporter domain occupies 13–252 (LEAQGVNVYY…GPTEEIFQNP (240 aa)). 45-52 (GPSGCGKS) lines the ATP pocket.

It belongs to the ABC transporter superfamily. Phosphate importer (TC 3.A.1.7) family. The complex is composed of two ATP-binding proteins (PstB), two transmembrane proteins (PstC and PstA) and a solute-binding protein (PstS).

It localises to the cell inner membrane. It carries out the reaction phosphate(out) + ATP + H2O = ADP + 2 phosphate(in) + H(+). Part of the ABC transporter complex PstSACB involved in phosphate import. Responsible for energy coupling to the transport system. This Synechocystis sp. (strain ATCC 27184 / PCC 6803 / Kazusa) protein is Phosphate import ATP-binding protein PstB 2.